Consider the following 285-residue polypeptide: Alginate lyase (285 aa).

Positions 1-20 (MIKSNLVISSLAIVSSMSYA) are cleaved as a signal peptide.

This sequence belongs to the polysaccharide lyase 6 family.

It catalyses the reaction Eliminative cleavage of alginate to give oligosaccharides with 4-deoxy-alpha-L-erythro-hex-4-enuronosyl groups at their non-reducing ends and beta-D-mannuronate at their reducing end.. The polypeptide is Alginate lyase (alxM) (Photobacterium sp. (strain ATCC 43367)).